We begin with the raw amino-acid sequence, 246 residues long: Acetylglutamate kinase (246 aa).

Residues 30–31 (GG), arginine 52, and asparagine 151 each bind substrate.

This sequence belongs to the acetylglutamate kinase family. ArgB subfamily.

The protein localises to the cytoplasm. The enzyme catalyses N-acetyl-L-glutamate + ATP = N-acetyl-L-glutamyl 5-phosphate + ADP. It functions in the pathway amino-acid biosynthesis; L-arginine biosynthesis; N(2)-acetyl-L-ornithine from L-glutamate: step 2/4. Catalyzes the ATP-dependent phosphorylation of N-acetyl-L-glutamate. This Methanopyrus kandleri (strain AV19 / DSM 6324 / JCM 9639 / NBRC 100938) protein is Acetylglutamate kinase.